Reading from the N-terminus, the 407-residue chain is Monooxygenase 2 (407 aa).

The protein belongs to the 3-hydroxybenzoate 6-hydroxylase family. Monomer. FAD is required as a cofactor. In terms of tissue distribution, expressed in seeds, seedlings, roots, leaves, flowers, pollen and siliques.

This chain is Monooxygenase 2, found in Arabidopsis thaliana (Mouse-ear cress).